A 313-amino-acid chain; its full sequence is tRNA dimethylallyltransferase (313 aa).

10–17 (GPTASGKT) provides a ligand contact to ATP. Residue 12 to 17 (TASGKT) participates in substrate binding. Interaction with substrate tRNA regions lie at residues 35–38 (DSAM), 159–163 (QRIQR), and 240–245 (RCVGYR).

This sequence belongs to the IPP transferase family. In terms of assembly, monomer. Mg(2+) is required as a cofactor.

It carries out the reaction adenosine(37) in tRNA + dimethylallyl diphosphate = N(6)-dimethylallyladenosine(37) in tRNA + diphosphate. Functionally, catalyzes the transfer of a dimethylallyl group onto the adenine at position 37 in tRNAs that read codons beginning with uridine, leading to the formation of N6-(dimethylallyl)adenosine (i(6)A). The polypeptide is tRNA dimethylallyltransferase (Legionella pneumophila subsp. pneumophila (strain Philadelphia 1 / ATCC 33152 / DSM 7513)).